We begin with the raw amino-acid sequence, 161 residues long: Cyclic pyranopterin monophosphate synthase (161 aa).

Residues 75–77 (LCH) and 113–114 (ME) contribute to the substrate site. D128 is a catalytic residue.

It belongs to the MoaC family. In terms of assembly, homohexamer; trimer of dimers.

The enzyme catalyses (8S)-3',8-cyclo-7,8-dihydroguanosine 5'-triphosphate = cyclic pyranopterin phosphate + diphosphate. The protein operates within cofactor biosynthesis; molybdopterin biosynthesis. Catalyzes the conversion of (8S)-3',8-cyclo-7,8-dihydroguanosine 5'-triphosphate to cyclic pyranopterin monophosphate (cPMP). The polypeptide is Cyclic pyranopterin monophosphate synthase (Methylobacillus flagellatus (strain ATCC 51484 / DSM 6875 / VKM B-1610 / KT)).